Here is a 35-residue protein sequence, read N- to C-terminus: Ranatuerin-2SPb (35 aa).

Cys28 and Cys33 are disulfide-bonded.

As to expression, expressed by the skin glands.

It localises to the secreted. Antibacterial activity against Gram-positive bacterium S.aureus. Shows no detectable hemolytic activity towards human erythrocytes. The protein is Ranatuerin-2SPb of Lithobates septentrionalis (Mink frog).